A 218-amino-acid chain; its full sequence is Acetoacetyl-CoA:acetate/butyrate CoA transferase alpha subunit (218 aa).

24 to 30 (GGFLNCG) is a CoA binding site.

It belongs to the 3-oxoacid CoA-transferase subunit A family. In terms of assembly, heterotetramer composed of two alpha subunits (CtfA) and two beta subunits (CtfB).

The catalysed reaction is acetoacetate + butanoyl-CoA = acetoacetyl-CoA + butanoate. It carries out the reaction acetoacetate + acetyl-CoA = acetoacetyl-CoA + acetate. With respect to regulation, the acetate and butyrate conversion reactions are inhibited in vitro by physiological levels of acetone and butanol. Functionally, catalyzes the transfer of CoA from acetoacetyl-CoA to acetate, butyrate and propionate. Also shows low activity with valerate, isobutyrate and crotonate. Plays an important role in the metabolic shift between the acid-producing and solvent-forming states of C.acetobutylicum. Acts mainly to detoxify the medium by removing the acetate and butyrate excreted earlier in the fermentation. In Clostridium acetobutylicum (strain ATCC 824 / DSM 792 / JCM 1419 / IAM 19013 / LMG 5710 / NBRC 13948 / NRRL B-527 / VKM B-1787 / 2291 / W), this protein is Acetoacetyl-CoA:acetate/butyrate CoA transferase alpha subunit.